The sequence spans 325 residues: Phospho-N-acetylmuramoyl-pentapeptide-transferase (325 aa).

9 consecutive transmembrane segments (helical) span residues 7–27 (LFVL…FIPF), 57–77 (IVIV…ITGF), 81–101 (LLLL…DDYL), 122–142 (VIAA…FIAI), 146–166 (TFGF…LLGA), 186–206 (IAFG…TALF), 227–247 (VFMG…IAIL), 252–272 (LMLI…IIQV), and 302–322 (VVVT…YIGV).

Belongs to the glycosyltransferase 4 family. MraY subfamily. The cofactor is Mg(2+).

Its subcellular location is the cell membrane. The enzyme catalyses UDP-N-acetyl-alpha-D-muramoyl-L-alanyl-gamma-D-glutamyl-meso-2,6-diaminopimeloyl-D-alanyl-D-alanine + di-trans,octa-cis-undecaprenyl phosphate = di-trans,octa-cis-undecaprenyl diphospho-N-acetyl-alpha-D-muramoyl-L-alanyl-D-glutamyl-meso-2,6-diaminopimeloyl-D-alanyl-D-alanine + UMP. The protein operates within cell wall biogenesis; peptidoglycan biosynthesis. Functionally, catalyzes the initial step of the lipid cycle reactions in the biosynthesis of the cell wall peptidoglycan: transfers peptidoglycan precursor phospho-MurNAc-pentapeptide from UDP-MurNAc-pentapeptide onto the lipid carrier undecaprenyl phosphate, yielding undecaprenyl-pyrophosphoryl-MurNAc-pentapeptide, known as lipid I. In Shouchella clausii (strain KSM-K16) (Alkalihalobacillus clausii), this protein is Phospho-N-acetylmuramoyl-pentapeptide-transferase.